The following is a 104-amino-acid chain: N(4)-acetylcytidine amidohydrolase (104 aa).

An ASCH domain is found at Ile6 to Gln94. The Proton acceptor role is filled by Lys21. The Nucleophile role is filled by Thr24. Catalysis depends on Glu74, which acts as the Proton donor.

The protein belongs to the N(4)-acetylcytidine amidohydrolase family.

The enzyme catalyses N(4)-acetylcytidine + H2O = cytidine + acetate + H(+). The catalysed reaction is N(4)-acetyl-2'-deoxycytidine + H2O = 2'-deoxycytidine + acetate + H(+). It catalyses the reaction N(4)-acetylcytosine + H2O = cytosine + acetate + H(+). In terms of biological role, catalyzes the hydrolysis of N(4)-acetylcytidine (ac4C). This Salmonella dublin (strain CT_02021853) protein is N(4)-acetylcytidine amidohydrolase (yqfB).